The primary structure comprises 106 residues: Nucleoid-associated protein XCV1128 (106 aa).

The tract at residues Ile81–Phe106 is disordered.

This sequence belongs to the YbaB/EbfC family. Homodimer.

The protein resides in the cytoplasm. The protein localises to the nucleoid. Functionally, binds to DNA and alters its conformation. May be involved in regulation of gene expression, nucleoid organization and DNA protection. This chain is Nucleoid-associated protein XCV1128, found in Xanthomonas euvesicatoria pv. vesicatoria (strain 85-10) (Xanthomonas campestris pv. vesicatoria).